Consider the following 151-residue polypeptide: MTGLERQLTEMLEAPVEASGYELVGLEFIRAGAHSTLRIYIDHENGINVDDCAEVSHQVSAVLDVEDPISVAYSLEVSSPGLERPLFKAAHYEQFIGHEVSIVLKMAVANRRKWKGIIHGVDGETVTVTVEGQQEEFALSNISKANLIPKF.

This sequence belongs to the RimP family.

It is found in the cytoplasm. Functionally, required for maturation of 30S ribosomal subunits. This chain is Ribosome maturation factor RimP, found in Vibrio parahaemolyticus serotype O3:K6 (strain RIMD 2210633).